Here is a 369-residue protein sequence, read N- to C-terminus: Anhydro-N-acetylmuramic acid kinase (369 aa).

Residue 12 to 19 (GTSLDGVD) coordinates ATP.

This sequence belongs to the anhydro-N-acetylmuramic acid kinase family.

The catalysed reaction is 1,6-anhydro-N-acetyl-beta-muramate + ATP + H2O = N-acetyl-D-muramate 6-phosphate + ADP + H(+). It participates in amino-sugar metabolism; 1,6-anhydro-N-acetylmuramate degradation. It functions in the pathway cell wall biogenesis; peptidoglycan recycling. Catalyzes the specific phosphorylation of 1,6-anhydro-N-acetylmuramic acid (anhMurNAc) with the simultaneous cleavage of the 1,6-anhydro ring, generating MurNAc-6-P. Is required for the utilization of anhMurNAc either imported from the medium or derived from its own cell wall murein, and thus plays a role in cell wall recycling. The protein is Anhydro-N-acetylmuramic acid kinase of Escherichia coli O7:K1 (strain IAI39 / ExPEC).